We begin with the raw amino-acid sequence, 430 residues long: Serine--tRNA ligase (430 aa).

An L-serine-binding site is contributed by 236 to 238; sequence TAE. 267-269 contributes to the ATP binding site; the sequence is RRE. Residue E290 participates in L-serine binding. Position 354–357 (354–357) interacts with ATP; the sequence is EISS. S390 contributes to the L-serine binding site.

It belongs to the class-II aminoacyl-tRNA synthetase family. Type-1 seryl-tRNA synthetase subfamily. Homodimer. The tRNA molecule binds across the dimer.

It is found in the cytoplasm. The enzyme catalyses tRNA(Ser) + L-serine + ATP = L-seryl-tRNA(Ser) + AMP + diphosphate + H(+). The catalysed reaction is tRNA(Sec) + L-serine + ATP = L-seryl-tRNA(Sec) + AMP + diphosphate + H(+). The protein operates within aminoacyl-tRNA biosynthesis; selenocysteinyl-tRNA(Sec) biosynthesis; L-seryl-tRNA(Sec) from L-serine and tRNA(Sec): step 1/1. Catalyzes the attachment of serine to tRNA(Ser). Is also able to aminoacylate tRNA(Sec) with serine, to form the misacylated tRNA L-seryl-tRNA(Sec), which will be further converted into selenocysteinyl-tRNA(Sec). The polypeptide is Serine--tRNA ligase (Gloeothece citriformis (strain PCC 7424) (Cyanothece sp. (strain PCC 7424))).